Here is a 218-residue protein sequence, read N- to C-terminus: Ribose-5-phosphate isomerase A (218 aa).

Residues 28–31 (TGST), 81–84 (DGAD), and 94–97 (KGGG) contribute to the substrate site. E103 acts as the Proton acceptor in catalysis. K121 is a binding site for substrate.

Belongs to the ribose 5-phosphate isomerase family. Homodimer.

It carries out the reaction aldehydo-D-ribose 5-phosphate = D-ribulose 5-phosphate. It functions in the pathway carbohydrate degradation; pentose phosphate pathway; D-ribose 5-phosphate from D-ribulose 5-phosphate (non-oxidative stage): step 1/1. Functionally, catalyzes the reversible conversion of ribose-5-phosphate to ribulose 5-phosphate. The polypeptide is Ribose-5-phosphate isomerase A (Psychromonas ingrahamii (strain DSM 17664 / CCUG 51855 / 37)).